The sequence spans 445 residues: Maltoporin (445 aa).

The N-terminal stretch at 1 to 25 is a signal peptide; it reads MKMKAKWLPIAAGVTAALASQAAFA.

The protein belongs to the porin LamB (TC 1.B.3) family. As to quaternary structure, homotrimer formed of three 18-stranded antiparallel beta-barrels, containing three independent channels.

The protein resides in the cell outer membrane. It catalyses the reaction beta-maltose(in) = beta-maltose(out). Functionally, involved in the transport of maltose and maltodextrins. This is Maltoporin from Aeromonas salmonicida.